The primary structure comprises 224 residues: Ribonuclease HII (224 aa).

An RNase H type-2 domain is found at glycine 17–valine 201. Positions 23, 24, and 111 each coordinate a divalent metal cation.

It belongs to the RNase HII family. The cofactor is Mn(2+). Requires Mg(2+) as cofactor.

The protein resides in the cytoplasm. The catalysed reaction is Endonucleolytic cleavage to 5'-phosphomonoester.. In terms of biological role, endonuclease that specifically degrades the RNA of RNA-DNA hybrids. The polypeptide is Ribonuclease HII (Pseudothermotoga lettingae (strain ATCC BAA-301 / DSM 14385 / NBRC 107922 / TMO) (Thermotoga lettingae)).